A 76-amino-acid polypeptide reads, in one-letter code: UPF0154 protein Sca_0984 (76 aa).

Residues W4–L24 form a helical membrane-spanning segment.

It belongs to the UPF0154 family.

It localises to the cell membrane. This is UPF0154 protein Sca_0984 from Staphylococcus carnosus (strain TM300).